The sequence spans 305 residues: Endonuclease III-like protein 1 (305 aa).

A mitochondrion-targeting transit peptide spans 1 to 28 (MNAAGVRMVVTRARSRGTGASLRRRGEK). Residues 1–83 (MNAAGVRMVV…HLQAPSWQPQ (83 aa)) form a disordered region. Ser64 carries the phosphoserine modification. Residues 192-216 (RYDGDIPASVAELVALPGVGPKMAH) form the HhH domain. The active-site Nucleophile; for N-glycosylase activity is Lys213. [4Fe-4S] cluster is bound by residues Cys283, Cys290, Cys293, and Cys299.

The protein belongs to the Nth/MutY family. Interacts with YBX1. Interacts with ERCC5/XPG; the interaction stimulates NTHL1 activity and NTHL1 binding to its DNA substrate. It depends on [4Fe-4S] cluster as a cofactor.

The protein localises to the nucleus. It is found in the mitochondrion. It catalyses the reaction 2'-deoxyribonucleotide-(2'-deoxyribose 5'-phosphate)-2'-deoxyribonucleotide-DNA = a 3'-end 2'-deoxyribonucleotide-(2,3-dehydro-2,3-deoxyribose 5'-phosphate)-DNA + a 5'-end 5'-phospho-2'-deoxyribonucleoside-DNA + H(+). Bifunctional DNA N-glycosylase with associated apurinic/apyrimidinic (AP) lyase function that catalyzes the first step in base excision repair (BER), the primary repair pathway for the repair of oxidative DNA damage. The DNA N-glycosylase activity releases the damaged DNA base from DNA by cleaving the N-glycosidic bond, leaving an AP site. The AP lyase activity cleaves the phosphodiester bond 3' to the AP site by a beta-elimination. Primarily recognizes and repairs oxidative base damage of pyrimidines. This Bos taurus (Bovine) protein is Endonuclease III-like protein 1.